Here is a 178-residue protein sequence, read N- to C-terminus: Large ribosomal subunit protein uL6 (178 aa).

Belongs to the universal ribosomal protein uL6 family. In terms of assembly, part of the 50S ribosomal subunit.

This protein binds to the 23S rRNA, and is important in its secondary structure. It is located near the subunit interface in the base of the L7/L12 stalk, and near the tRNA binding site of the peptidyltransferase center. This Francisella philomiragia subsp. philomiragia (strain ATCC 25017 / CCUG 19701 / FSC 153 / O#319-036) protein is Large ribosomal subunit protein uL6.